Reading from the N-terminus, the 272-residue chain is D-aminoacyl-tRNA deacylase (272 aa).

This sequence belongs to the DtdA deacylase family. Monomer. Requires Zn(2+) as cofactor.

It carries out the reaction a D-aminoacyl-tRNA + H2O = a tRNA + a D-alpha-amino acid + H(+). The enzyme catalyses glycyl-tRNA(Ala) + H2O = tRNA(Ala) + glycine + H(+). Its function is as follows. D-aminoacyl-tRNA deacylase with broad substrate specificity. By recycling D-aminoacyl-tRNA to D-amino acids and free tRNA molecules, this enzyme counteracts the toxicity associated with the formation of D-aminoacyl-tRNA entities in vivo. The polypeptide is D-aminoacyl-tRNA deacylase (Thermococcus onnurineus (strain NA1)).